We begin with the raw amino-acid sequence, 239 residues long: Probable transcriptional regulatory protein YeeI (239 aa).

Belongs to the TACO1 family. YeeN subfamily.

The protein resides in the cytoplasm. This Bacillus subtilis (strain 168) protein is Probable transcriptional regulatory protein YeeI (yeeI).